Here is a 783-residue protein sequence, read N- to C-terminus: Ras and Rab interactor 1 (783 aa).

At Met1 the chain carries N-acetylmethionine. The disordered stretch occupies residues 1-53 (MESPGESGAGSPGAPSPSSFTTGHLAREKPAQDPLYDVPNASGGQAGGPQRPG). Residues Ser3 and Ser16 each carry the phosphoserine modification. Tyr36 carries the post-translational modification Phosphotyrosine; by ABL1 and ABL2. The SH2 domain maps to 69–163 (WLQLQANAAA…ILLLPLQLPR (95 aa)). Phosphoserine is present on residues Ser210, Ser258, Ser333, and Ser337. Disordered regions lie at residues 250 to 282 (STET…ERLP) and 295 to 342 (YRVP…HLGR). Over residues 257 to 269 (LSPPAVPPPPVPV) the composition is skewed to pro residues. Residues 294-727 (GYRVPAGSGP…GSGQSEARSR (434 aa)) form a ras and 14-3-3 protein binding region region. The segment covering 317 to 334 (GSPSSSEEEGVPGSRGSP) has biased composition (low complexity). Phosphoserine; by PKD/PRKD1 is present on Ser351. Residues 456–598 (LAADGSLGRL…LSGLGQAHTL (143 aa)) form the VPS9 domain. 2 positions are modified to phosphoserine: Ser609 and Ser611. The 83-residue stretch at 624 to 706 (FQHLLRVAYQ…GYLVYRRAEW (83 aa)) folds into the Ras-associating domain. An Omega-N-methylarginine modification is found at Arg692. The segment at 709–783 (TQGAVTEEEG…EAEGSRAAEE (75 aa)) is disordered. Over residues 762-772 (QAQEGPAQPGE) the composition is skewed to low complexity.

The protein belongs to the RIN (Ras interaction/interference) family. As to quaternary structure, interacts with the GTP-bound form of Ras proteins (NRAS, HRAS and KRAS). This interaction prevents the association between RAF1 and Ras. Interacts with 14-3-3 proteins YWHAB, YWHAE and YWHAZ when phosphorylated on Ser-351. Interacts with the SH3 domain of ABL1 and ABL2. Interacts with RAB5A. The interaction with Ras is probably regulated and antagonized by the interaction with 14-3-3 proteins. The interaction with 14-3-3 proteins is regulated by phosphorylation on Ser-351. Post-translationally, phosphorylated on tyrosine residues by ABL1 and ABL2. Phosphorylation at Ser-351 by PRKD1 induces interaction with 14-3-3 proteins. As to expression, expressed in all tissues examined with high levels in brain, placenta and pancreas.

It is found in the cytoplasm. The protein resides in the membrane. The protein localises to the cytoskeleton. Ras effector protein, which may serve as an inhibitory modulator of neuronal plasticity in aversive memory formation. Can affect Ras signaling at different levels. First, by competing with RAF1 protein for binding to activated Ras. Second, by enhancing signaling from ABL1 and ABL2, which regulate cytoskeletal remodeling. Third, by activating RAB5A, possibly by functioning as a guanine nucleotide exchange factor (GEF) for RAB5A, by exchanging bound GDP for free GTP, and facilitating Ras-activated receptor endocytosis. The polypeptide is Ras and Rab interactor 1 (RIN1) (Homo sapiens (Human)).